The primary structure comprises 500 residues: NAD(P)H-quinone oxidoreductase chain 4, chloroplastic (500 aa).

Helical transmembrane passes span 4 to 24 (FPWL…IFFL), 37 to 57 (ICIC…HFQL), 87 to 107 (IGPI…AWPV), 113 to 130 (LFHF…GLFS), 134 to 154 (LLLF…LLSM), 167 to 187 (FILY…GMGL), 211 to 231 (ILFY…IPLH), 242 to 262 (HYST…YGLV), 272 to 292 (AHSI…IYAA), 305 to 325 (IAYS…SITD), 330 to 350 (GAIL…FLAG), 386 to 406 (LALP…GIIT), 416 to 436 (ILIT…LLSM), and 462 to 482 (LFVS…PDFV).

This sequence belongs to the complex I subunit 4 family.

The protein localises to the plastid. The protein resides in the chloroplast thylakoid membrane. It catalyses the reaction a plastoquinone + NADH + (n+1) H(+)(in) = a plastoquinol + NAD(+) + n H(+)(out). The catalysed reaction is a plastoquinone + NADPH + (n+1) H(+)(in) = a plastoquinol + NADP(+) + n H(+)(out). The chain is NAD(P)H-quinone oxidoreductase chain 4, chloroplastic from Acorus calamus var. americanus (American sweet flag).